The chain runs to 687 residues: MAKDLFLEIGCEEIPAGFVPKAMADMELLIKKEFDSARIEYGEIVTLGTPRRLVLAVKGVAERQPDAELTAMGPAKSHAYDADGNPTKAAQGFARGQGIDVSQLKLVTTEKGEYLAAVKSEIGRATAELLPELLPRLIGNIPFKKSMRWADFDVRFARPIHWIVALFDGKVVPFSFGNIDSGSASRGHRFMANTSFPVRDLAHYLEECERHFVIPDPNKRKEIIRAEIERVAKQAKGNVLPDEALLEQVSYLVEYPSAVHGTFSPDFLVVPREVLITSMREHQRYFSLVDDEGKLLPGFITINNTITEDPQVVVKGNERVLRARLSDARFFFDEDHKVRLEARVESLKSVVYQAKLGTSYEKMERFRELGKRLAQRLNPAVTKEVERAATLCKADLVSGMVGEFPEVQGIMGREYALHDGEEKAVANAIAEHYLPTQAGGELPASDIGAFVSLADKMDTICGCFSVGLIPTGSADPYALRRSALGIINIILDKGYREPLSDFVKASLDLLSAKATRPLAEVQKDVLDFFRGRFVNLMADRFPSDAVEAVVSVSFDDLVEAAAKIEALAGFRNRDDFGPLAVAFKRVCNIVKDGVDTPVSTELFQDAAEGELHQALTQVSGKVAAALKKADYLAALTEIATLKPAVDLFFEKVMVMAEDERVRQNRLALLTGIARLFGSLADFSRLSP.

It belongs to the class-II aminoacyl-tRNA synthetase family. Tetramer of two alpha and two beta subunits.

It localises to the cytoplasm. It catalyses the reaction tRNA(Gly) + glycine + ATP = glycyl-tRNA(Gly) + AMP + diphosphate. The sequence is that of Glycine--tRNA ligase beta subunit from Citrifermentans bemidjiense (strain ATCC BAA-1014 / DSM 16622 / JCM 12645 / Bem) (Geobacter bemidjiensis).